Reading from the N-terminus, the 672-residue chain is DNA ligase (672 aa).

Residues aspartate 30–aspartate 34, serine 79–leucine 80, and glutamate 110 contribute to the NAD(+) site. The N6-AMP-lysine intermediate role is filled by lysine 112. NAD(+) is bound by residues arginine 133, glutamate 170, lysine 287, and lysine 311. Zn(2+) contacts are provided by cysteine 405, cysteine 408, cysteine 423, and cysteine 429. Residues alanine 590 to isoleucine 672 form the BRCT domain.

This sequence belongs to the NAD-dependent DNA ligase family. LigA subfamily. Mg(2+) is required as a cofactor. The cofactor is Mn(2+).

It carries out the reaction NAD(+) + (deoxyribonucleotide)n-3'-hydroxyl + 5'-phospho-(deoxyribonucleotide)m = (deoxyribonucleotide)n+m + AMP + beta-nicotinamide D-nucleotide.. Its function is as follows. DNA ligase that catalyzes the formation of phosphodiester linkages between 5'-phosphoryl and 3'-hydroxyl groups in double-stranded DNA using NAD as a coenzyme and as the energy source for the reaction. It is essential for DNA replication and repair of damaged DNA. The polypeptide is DNA ligase (Marinomonas sp. (strain MWYL1)).